The primary structure comprises 563 residues: Tripeptidyl-peptidase 1 (563 aa).

A signal peptide spans 1–19; sequence MGLQACLLGLFALILSGKC. Residues 20–195 constitute a propeptide, removed in mature form; that stretch reads SYSPEPDQRR…PEPQVTGTVG (176 aa). Cys-111 and Cys-122 are joined by a disulfide. Positions 199–563 constitute a Peptidase S53 domain; it reads GVTPSVIRKR…PALLKTLLNP (365 aa). Residues Asn-210 and Asn-222 are each glycosylated (N-linked (GlcNAc...) asparagine). Active-site charge relay system residues include Glu-272 and Asp-276. 3 N-linked (GlcNAc...) asparagine glycosylation sites follow: Asn-286, Asn-313, and Asn-443. 2 disulfide bridges follow: Cys-365–Cys-526 and Cys-522–Cys-537. Catalysis depends on Ser-475, which acts as the Charge relay system. Ca(2+) contacts are provided by Asp-517 and Val-518. Gly-539, Gly-541, and Asp-543 together coordinate Ca(2+).

Monomer. Interacts with CLN5. Interacts with CLN3. Ca(2+) serves as cofactor. Activated by autocatalytic proteolytical processing upon acidification. N-glycosylation is required for processing and activity. In terms of tissue distribution, detected in all tissues examined with highest levels in heart and placenta and relatively similar levels in other tissues.

It localises to the lysosome. Its subcellular location is the melanosome. The catalysed reaction is Release of an N-terminal tripeptide from a polypeptide, but also has endopeptidase activity.. With respect to regulation, inhibited by diisopropyl fluorophosphate (DFP). In terms of biological role, lysosomal serine protease with tripeptidyl-peptidase I activity. May act as a non-specific lysosomal peptidase which generates tripeptides from the breakdown products produced by lysosomal proteinases. Requires substrates with an unsubstituted N-terminus. The sequence is that of Tripeptidyl-peptidase 1 (TPP1) from Homo sapiens (Human).